The sequence spans 59 residues: MKLLQGRMTYRGDAHPHPRITPSLLANYVGNFKGFAMWHATGKIIHVPVRHQTGMHFCI.

This is an uncharacterized protein from Saccharomyces cerevisiae (strain ATCC 204508 / S288c) (Baker's yeast).